The chain runs to 39 residues: Photosystem II reaction center protein L (39 aa).

The chain crosses the membrane as a helical span at residues 18–38 (SLYLGLLLVFVTGVLFSSYFF).

The protein belongs to the PsbL family. In terms of assembly, PSII is composed of 1 copy each of membrane proteins PsbA, PsbB, PsbC, PsbD, PsbE, PsbF, PsbH, PsbI, PsbJ, PsbK, PsbL, PsbM, PsbT, PsbX, PsbY, PsbZ, Psb30/Ycf12, at least 3 peripheral proteins of the oxygen-evolving complex and a large number of cofactors. It forms dimeric complexes.

The protein localises to the plastid. It localises to the organellar chromatophore thylakoid membrane. One of the components of the core complex of photosystem II (PSII). PSII is a light-driven water:plastoquinone oxidoreductase that uses light energy to abstract electrons from H(2)O, generating O(2) and a proton gradient subsequently used for ATP formation. It consists of a core antenna complex that captures photons, and an electron transfer chain that converts photonic excitation into a charge separation. This subunit is found at the monomer-monomer interface and is required for correct PSII assembly and/or dimerization. The protein is Photosystem II reaction center protein L of Paulinella chromatophora.